The following is a 564-amino-acid chain: Arrestin domain-containing protein E (564 aa).

Low complexity predominate over residues 74–146; the sequence is SQQPQSSQPS…NTSNGFSPPN (73 aa). Disordered regions lie at residues 74 to 150 and 245 to 286; these read SQQP…LNKN and ASQP…SFPS. A compositionally biased stretch (pro residues) spans 250-259; the sequence is PQQPQQPQPQ. Residues 260-269 show a composition bias toward low complexity; that stretch reads QPQQQQFQQQ. A compositionally biased stretch (polar residues) spans 270 to 285; it reads SYNNNNSTQSMLSSFP. An LIM zinc-binding domain is found at 348 to 413; it reads DKCAACDALL…PMCFESTTGL (66 aa).

The chain is Arrestin domain-containing protein E (adcE) from Dictyostelium discoideum (Social amoeba).